The following is a 510-amino-acid chain: ATP synthase subunit alpha (510 aa).

Position 169–176 (169–176 (GDRQTGKT)) interacts with ATP.

This sequence belongs to the ATPase alpha/beta chains family. F-type ATPases have 2 components, CF(1) - the catalytic core - and CF(0) - the membrane proton channel. CF(1) has five subunits: alpha(3), beta(3), gamma(1), delta(1), epsilon(1). CF(0) has three main subunits: a(1), b(2) and c(9-12). The alpha and beta chains form an alternating ring which encloses part of the gamma chain. CF(1) is attached to CF(0) by a central stalk formed by the gamma and epsilon chains, while a peripheral stalk is formed by the delta and b chains.

It is found in the cell inner membrane. The catalysed reaction is ATP + H2O + 4 H(+)(in) = ADP + phosphate + 5 H(+)(out). Its function is as follows. Produces ATP from ADP in the presence of a proton gradient across the membrane. The alpha chain is a regulatory subunit. The sequence is that of ATP synthase subunit alpha from Rickettsia massiliae (strain Mtu5).